Here is a 350-residue protein sequence, read N- to C-terminus: Secreted effector protein PipB2 (350 aa).

4 consecutive Pentapeptide repeat domains span residues 162-201 (ANLT…NLSG), 202-241 (ASLG…SLLG), 247-286 (CNCS…IMEG), and 287-326 (AVLT…TLTD).

In terms of assembly, interacts with the host kinesin light chain (KLC), a subunit of the kinesin-1 motor complex.

The protein localises to the secreted. It localises to the host membrane. In terms of biological role, effector proteins function to alter host cell physiology and promote bacterial survival in host tissues. Involved in the reorganization of late endosome/lysosome (LE/Lys) compartments in mammalian cells. Necessary and sufficient to link kinesin-1 onto the Salmonella-containing vacuole (SCV) membrane. Required for centrifugal extension of lysosomal glycoprotein-rich membrane tubules, known as Salmonella-induced filaments (Sifs), away from the SCV and toward the cell periphery. Required for virulence, but not for intracellular survival and replication in phagocytic cells. This is Secreted effector protein PipB2 (pipB2) from Salmonella typhi.